The primary structure comprises 71 residues: MPVIKVRENEPFDVALRRFKRSCEKAGILAEVRRREFYEKPTTERKRAKASAVKRHAKKLARENARRTRLY.

Residues 43–71 form a disordered region; that stretch reads TERKRAKASAVKRHAKKLARENARRTRLY. Positions 46 to 59 are enriched in basic residues; that stretch reads KRAKASAVKRHAKK. Residues 60 to 71 are compositionally biased toward basic and acidic residues; that stretch reads LARENARRTRLY.

This sequence belongs to the bacterial ribosomal protein bS21 family.

The protein is Small ribosomal subunit protein bS21 of Edwardsiella ictaluri (strain 93-146).